Consider the following 678-residue polypeptide: ATP-dependent RNA helicase DHX58 (678 aa).

Residues 11 to 188 (IMPALEGKNI…DGAINHVLQL (178 aa)) enclose the Helicase ATP-binding domain. 24 to 31 (LPTGAGKT) provides a ligand contact to ATP. The short motif at 131–134 (DECH) is the DECH box element. The 165-residue stretch at 350 to 514 (KLEMLEKILQ…QAVAAVQKMD (165 aa)) folds into the Helicase C-terminal domain. Residues 489-546 (ELKRELINEALETLMEQAVAAVQKMDQAEYQAKIRDLQQAALTKRAAQAAQRENQRQQ) adopt a coiled-coil conformation. The RLR CTR domain occupies 539 to 669 (QRENQRQQFP…PDFDFLQHCA (131 aa)). Zn(2+) is bound by residues Cys556, Cys559, Cys612, and Cys615. An RNA-binding region spans residues 572–655 (VEGTHHVNVN…RIQAKKWSRV (84 aa)).

Belongs to the helicase family. RLR subfamily. In terms of assembly, monomer in the absence of dsRNA. Homodimer in the presence of dsRNA. Interacts with RIGI (via CARD domain), MAVS/IPS1 and DDX60. Found in a complex with RIGI and IFIH1/MDA5. Interacts with ANKRD17. Directly interacts with ATG5 and ATG12, either as ATG5 and ATG12 monomers or as ATG12-ATG5 conjugates. As to quaternary structure, (Microbial infection) Interacts (via helicase C-terminal domain) with non-structural protein V of paramyxoviruses including human parainfluenza 2 virus, human parainfluenza 5 virus, measles virus, mumps virus, hendra virus and nipah virus. Expressed in testis, nerve and spleen. Also expressed in the brain.

The protein resides in the cytoplasm. It catalyses the reaction ATP + H2O = ADP + phosphate + H(+). In terms of biological role, acts as a regulator of RIGI and IFIH1/MDA5 mediated antiviral signaling. Cannot initiate antiviral signaling as it lacks the CARD domain required for activating MAVS/IPS1-dependent signaling events. Can have both negative and positive regulatory functions related to RIGI and IFIH1/MDA5 signaling and this role in regulating signaling may be complex and could probably depend on characteristics of the infecting virus or target cells, or both. Its inhibitory action on RIG-I signaling may involve the following mechanisms: competition with RIGI for binding to the viral RNA, binding to RIGI and inhibiting its dimerization and interaction with MAVS/IPS1, competing with IKBKE in its binding to MAVS/IPS1 thereby inhibiting activation of interferon regulatory factor 3 (IRF3). Its positive regulatory role may involve unwinding or stripping nucleoproteins of viral RNA thereby facilitating their recognition by RIGI and IFIH1/MDA5. Involved in the innate immune response to various RNA viruses and some DNA viruses such as poxviruses and coronavirus SARS-CoV-2, and also to the bacterial pathogen Listeria monocytogenes. Can bind both ssRNA and dsRNA, with a higher affinity for dsRNA. Shows a preference to 5'-triphosphorylated RNA, although it can recognize RNA lacking a 5'-triphosphate. The protein is ATP-dependent RNA helicase DHX58 of Homo sapiens (Human).